The following is a 102-amino-acid chain: MDNLSAQLENQIDELKKLQKSVITYEQAQRQQLYAGKITDLKAFGKMLNDKRKSLGIELSMLELQTGVSISTLNRLFQDPSQVRFTTVFLVAQTLGVSLCAI.

In terms of domain architecture, HTH cro/C1-type spans 48-102 (LNDKRKSLGIELSMLELQTGVSISTLNRLFQDPSQVRFTTVFLVAQTLGVSLCAI). The H-T-H motif DNA-binding region spans 59 to 78 (LSMLELQTGVSISTLNRLFQ).

This is an uncharacterized protein from Haemophilus influenzae (strain ATCC 51907 / DSM 11121 / KW20 / Rd).